The primary structure comprises 101 residues: Urease subunit beta (101 aa).

The protein belongs to the urease beta subunit family. In terms of assembly, heterotrimer of UreA (gamma), UreB (beta) and UreC (alpha) subunits. Three heterotrimers associate to form the active enzyme.

It is found in the cytoplasm. The catalysed reaction is urea + 2 H2O + H(+) = hydrogencarbonate + 2 NH4(+). The protein operates within nitrogen metabolism; urea degradation; CO(2) and NH(3) from urea (urease route): step 1/1. The protein is Urease subunit beta of Bradyrhizobium sp. (strain BTAi1 / ATCC BAA-1182).